The primary structure comprises 315 residues: Acetyl-coenzyme A carboxylase carboxyl transferase subunit alpha (315 aa).

The CoA carboxyltransferase C-terminal domain occupies 38-292; sequence RLQKKSNELT…KLRLKEDLAE (255 aa).

This sequence belongs to the AccA family. Acetyl-CoA carboxylase is a heterohexamer composed of biotin carboxyl carrier protein (AccB), biotin carboxylase (AccC) and two subunits each of ACCase subunit alpha (AccA) and ACCase subunit beta (AccD).

It localises to the cytoplasm. It catalyses the reaction N(6)-carboxybiotinyl-L-lysyl-[protein] + acetyl-CoA = N(6)-biotinyl-L-lysyl-[protein] + malonyl-CoA. It participates in lipid metabolism; malonyl-CoA biosynthesis; malonyl-CoA from acetyl-CoA: step 1/1. In terms of biological role, component of the acetyl coenzyme A carboxylase (ACC) complex. First, biotin carboxylase catalyzes the carboxylation of biotin on its carrier protein (BCCP) and then the CO(2) group is transferred by the carboxyltransferase to acetyl-CoA to form malonyl-CoA. This Haemophilus influenzae (strain 86-028NP) protein is Acetyl-coenzyme A carboxylase carboxyl transferase subunit alpha.